The sequence spans 404 residues: Cysteine desulfurase IscS (404 aa).

Pyridoxal 5'-phosphate-binding positions include 75–76 (AT), asparagine 155, glutamine 183, and 203–205 (SGH). Lysine 206 is modified (N6-(pyridoxal phosphate)lysine). Residue threonine 243 participates in pyridoxal 5'-phosphate binding. Cysteine 328 (cysteine persulfide intermediate) is an active-site residue. Cysteine 328 serves as a coordination point for [2Fe-2S] cluster.

It belongs to the class-V pyridoxal-phosphate-dependent aminotransferase family. NifS/IscS subfamily. As to quaternary structure, homodimer. Forms a heterotetramer with IscU, interacts with other sulfur acceptors. Pyridoxal 5'-phosphate serves as cofactor.

The protein resides in the cytoplasm. It carries out the reaction (sulfur carrier)-H + L-cysteine = (sulfur carrier)-SH + L-alanine. The protein operates within cofactor biosynthesis; iron-sulfur cluster biosynthesis. Its function is as follows. Master enzyme that delivers sulfur to a number of partners involved in Fe-S cluster assembly, tRNA modification or cofactor biosynthesis. Catalyzes the removal of elemental sulfur atoms from cysteine to produce alanine. Functions as a sulfur delivery protein for Fe-S cluster synthesis onto IscU, an Fe-S scaffold assembly protein, as well as other S acceptor proteins. The chain is Cysteine desulfurase IscS from Shewanella putrefaciens (strain CN-32 / ATCC BAA-453).